Reading from the N-terminus, the 943-residue chain is 2-oxoglutarate dehydrogenase E1 component (943 aa).

It belongs to the alpha-ketoglutarate dehydrogenase family. As to quaternary structure, homodimer. Part of the 2-oxoglutarate dehydrogenase (OGDH) complex composed of E1 (2-oxoglutarate dehydrogenase), E2 (dihydrolipoamide succinyltransferase) and E3 (dihydrolipoamide dehydrogenase); the complex contains multiple copies of the three enzymatic components (E1, E2 and E3). Thiamine diphosphate is required as a cofactor.

It carries out the reaction N(6)-[(R)-lipoyl]-L-lysyl-[protein] + 2-oxoglutarate + H(+) = N(6)-[(R)-S(8)-succinyldihydrolipoyl]-L-lysyl-[protein] + CO2. In terms of biological role, E1 component of the 2-oxoglutarate dehydrogenase (OGDH) complex which catalyzes the decarboxylation of 2-oxoglutarate, the first step in the conversion of 2-oxoglutarate to succinyl-CoA and CO(2). The chain is 2-oxoglutarate dehydrogenase E1 component from Shouchella clausii (strain KSM-K16) (Alkalihalobacillus clausii).